The following is a 119-amino-acid chain: Large ribosomal subunit protein uL18 (119 aa).

Belongs to the universal ribosomal protein uL18 family. In terms of assembly, part of the 50S ribosomal subunit; part of the 5S rRNA/L5/L18/L25 subcomplex. Contacts the 5S and 23S rRNAs.

In terms of biological role, this is one of the proteins that bind and probably mediate the attachment of the 5S RNA into the large ribosomal subunit, where it forms part of the central protuberance. This is Large ribosomal subunit protein uL18 from Clostridium botulinum (strain ATCC 19397 / Type A).